We begin with the raw amino-acid sequence, 513 residues long: Activin receptor type-2A (513 aa).

A signal peptide spans 1 to 19 (MGAAAKLAFAVFLISCSSG). Over 20 to 135 (AILGRSETQE…TSNPVTPKPP (116 aa)) the chain is Extracellular. 5 disulfide bridges follow: C30–C60, C50–C78, C85–C104, C91–C103, and C105–C110. Residues N43 and N66 are each glycosylated (N-linked (GlcNAc...) asparagine). The helical transmembrane segment at 136 to 161 (YYNILLYSLVPLMLIAGIVICAFWVY) threads the bilayer. The Cytoplasmic portion of the chain corresponds to 162-513 (RHHMMAYPPV…VDFPPKESSL (352 aa)). The 294-residue stretch at 192-485 (LQLLEVKARG…GERITQMQRL (294 aa)) folds into the Protein kinase domain. ATP is bound by residues 198 to 206 (KARGRFGCV) and K219. D322 acts as the Proton acceptor in catalysis.

This sequence belongs to the protein kinase superfamily. TKL Ser/Thr protein kinase family. TGFB receptor subfamily. In terms of assembly, part of a complex consisting of MAGI2/ARIP1, ACVR2A, ACVR1B and SMAD3. Interacts with MAGI2/ARIP1. Interacts with type I receptor ACVR1. Interacts with BMP7. Interacts with TSC22D1/TSC-22. Interacts with activin A/INHBA. The cofactor is Mg(2+). Mn(2+) serves as cofactor.

The protein resides in the cell membrane. It catalyses the reaction L-threonyl-[receptor-protein] + ATP = O-phospho-L-threonyl-[receptor-protein] + ADP + H(+). The enzyme catalyses L-seryl-[receptor-protein] + ATP = O-phospho-L-seryl-[receptor-protein] + ADP + H(+). Its function is as follows. On ligand binding, forms a receptor complex consisting of two type II and two type I transmembrane serine/threonine kinases. Type II receptors phosphorylate and activate type I receptors which autophosphorylate, then bind and activate SMAD transcriptional regulators. Receptor for activin A, activin B and inhibin A. Mediates induction of adipogenesis by GDF6. This Rattus norvegicus (Rat) protein is Activin receptor type-2A.